The primary structure comprises 319 residues: Acetyl-coenzyme A carboxylase carboxyl transferase subunit alpha (319 aa).

The region spanning 35–292 (EISKLMRRLV…KKTIAEALAE (258 aa)) is the CoA carboxyltransferase C-terminal domain.

This sequence belongs to the AccA family. As to quaternary structure, acetyl-CoA carboxylase is a heterohexamer composed of biotin carboxyl carrier protein (AccB), biotin carboxylase (AccC) and two subunits each of ACCase subunit alpha (AccA) and ACCase subunit beta (AccD).

The protein localises to the cytoplasm. It carries out the reaction N(6)-carboxybiotinyl-L-lysyl-[protein] + acetyl-CoA = N(6)-biotinyl-L-lysyl-[protein] + malonyl-CoA. It participates in lipid metabolism; malonyl-CoA biosynthesis; malonyl-CoA from acetyl-CoA: step 1/1. Component of the acetyl coenzyme A carboxylase (ACC) complex. First, biotin carboxylase catalyzes the carboxylation of biotin on its carrier protein (BCCP) and then the CO(2) group is transferred by the carboxyltransferase to acetyl-CoA to form malonyl-CoA. The sequence is that of Acetyl-coenzyme A carboxylase carboxyl transferase subunit alpha from Desulfitobacterium hafniense (strain DSM 10664 / DCB-2).